We begin with the raw amino-acid sequence, 184 residues long: Photosystem I assembly protein Ycf4 (184 aa).

Helical transmembrane passes span 24-44 (WAFILFLGSLGFLLVGTSSYI) and 57-77 (IIFFPQGIVMSFYGIAGLFIS).

The protein belongs to the Ycf4 family.

The protein resides in the plastid. The protein localises to the chloroplast thylakoid membrane. Seems to be required for the assembly of the photosystem I complex. This chain is Photosystem I assembly protein Ycf4, found in Buxus microphylla (Littleleaf boxwood).